The following is a 237-amino-acid chain: Sugar fermentation stimulation protein homolog (237 aa).

Belongs to the SfsA family.

This chain is Sugar fermentation stimulation protein homolog, found in Actinobacillus pleuropneumoniae serotype 3 (strain JL03).